The sequence spans 67 residues: Probable pilin MJ1400 (67 aa).

Residues 1–13 constitute a propeptide that is removed on maturation; that stretch reads MKFIMKFIKSNKG. The QXSXEXXXL motif lies at 14–22; sequence QISLEFSLL.

Post-translationally, the N-terminus is cleaved by the prepilin peptidase EppA, which recognizes the class III signal sequence.

The protein resides in the secreted. It localises to the cell surface. The protein localises to the fimbrium. The chain is Probable pilin MJ1400 from Methanocaldococcus jannaschii (strain ATCC 43067 / DSM 2661 / JAL-1 / JCM 10045 / NBRC 100440) (Methanococcus jannaschii).